The chain runs to 797 residues: N-acetylneuraminate (7)9-O-acetyltransferase (797 aa).

At 1–18 the chain is on the cytoplasmic side; that stretch reads MAALAYNLGKREINHYFS. The helical transmembrane segment at 19–39 threads the bilayer; the sequence is VRSAKVLALVAVLLLAACHLA. Residues 40 to 313 are Lumenal-facing; that stretch reads SRRYRGNDSC…QPRPPLTLIQ (274 aa). Asn46 is a glycosylation site (N-linked (GlcNAc...) asparagine). Ser94 functions as the Acyl-ester intermediate in the catalytic mechanism. N-linked (GlcNAc...) asparagine glycosylation is found at Asn175 and Asn187. Catalysis depends on residues Asp270 and His273. A helical membrane pass occupies residues 314–334; it reads KLAACFFTLSIIGYFIFYVIH. Over 335–363 the chain is Cytoplasmic; the sequence is RNAHRKNKPCTDLESGEEKKNIINTPVSS. The chain crosses the membrane as a helical span at residues 364–384; the sequence is LEILLQSFCKLGLIMAYFYMC. Residues 385–395 lie on the Lumenal side of the membrane; that stretch reads DRANLFMKENK. The chain crosses the membrane as a helical span at residues 396-416; sequence FYTHSSFFIPIIYILVLGVFY. The Cytoplasmic segment spans residues 417 to 439; that stretch reads NENTKETKVLNREQTDEWKGWMQ. Residues 440 to 460 traverse the membrane as a helical segment; that stretch reads LVILIYHISGASTFLPVYMHI. Arg461 is a topological domain (lumenal). The chain crosses the membrane as a helical span at residues 462-482; that stretch reads VLVAAYLFQTGYGHFSYFWIK. Residues 483 to 486 lie on the Cytoplasmic side of the membrane; that stretch reads GDFG. A helical membrane pass occupies residues 487–507; the sequence is IHRVCQVLFRLNFLVVVLCIV. At 508 to 513 the chain is on the lumenal side; that stretch reads MDRPYQ. The chain crosses the membrane as a helical span at residues 514–534; it reads FYYFVPLVTVWFMVIYVTLAL. At 535–546 the chain is on the cytoplasmic side; sequence WPQITQKKANGN. Residues 547–567 traverse the membrane as a helical segment; that stretch reads FFWYLGLLLKLGLLLLCIWFL. Residues 568 to 599 are Lumenal-facing; the sequence is AYSQGAFEKIFSLWPLSKCFELEGSVYEWWFR. Residues 600 to 620 form a helical membrane-spanning segment; that stretch reads WRLDRYVVFHGVLFAFIYLAL. Over 621 to 638 the chain is Cytoplasmic; it reads QRRQILSEGKGEPLFSNK. The helical transmembrane segment at 639–659 threads the bilayer; that stretch reads ISNFLLFVSVVSFLTYSIWAS. Over 660–671 the chain is Lumenal; that stretch reads SCKNKAECNELH. A helical membrane pass occupies residues 672–692; the sequence is PSVSVVQIVAFILIRNIPGYA. At 693–698 the chain is on the cytoplasmic side; it reads RSIYSS. Residues 699–719 traverse the membrane as a helical segment; it reads FFAWFGKISLELFICQYHIWL. At 720–725 the chain is on the lumenal side; that stretch reads AADTRG. Residues 726-746 traverse the membrane as a helical segment; it reads ILVLIPGNPTLNIIVSTFIFV. The Cytoplasmic segment spans residues 747-770; sequence CVAHEISQITTDLAQVVIPKDNPS. Residues 771–791 traverse the membrane as a helical segment; it reads LFRRLACTIAFFGGVLILSSI. Topologically, residues 792-797 are lumenal; sequence QDKSRL.

It belongs to the PC-esterase family. CASD1 subfamily. Post-translationally, N-glycosylated. Ubiquitously expressed.

It is found in the golgi apparatus membrane. It carries out the reaction CMP-N-acetyl-beta-neuraminate + acetyl-CoA = CMP-N-acetyl-9-O-acetyl-beta-neuraminate + CoA. The enzyme catalyses a ganglioside GD3 (d18:1(4E)) + acetyl-CoA = a ganglioside Ac-O-7-GD3(d18:1(4E)) + CoA. The catalysed reaction is CMP-N-acetyl-beta-neuraminate + acetyl-CoA = CMP-N-acetyl-7-O-acetyl-beta-neuraminate + CoA. Key enzyme in the biosynthesis of O-acetylated (O-Ac) sialoglycans such as gangliosides O-AcGD3 and O-AcGD2, which affect various processes such as cell-cell interactions, host-pathogen recognition. Catalyzes the transfer of an acetyl group from a donor, the acetyl-coenzyme-A molecule (acetyl-CoA), to the C7/8/9 OH-position of a sialic acid residue. The primary site of O-acetyl group transfer on sialic acid seems to depend on cell type and can be C7, from which the O-acetyl group could subsequently migrate to the C8 and then to the C9 position, or at C9 with possibility of migrating to the C8 and then to the C7 position. Together with ST8SIA1 (GD3 synthase) it increases the levels of ganglioside Ac-O-7-GD3. Can transfer the acetyl group from acetyl-CoA to free sialate (N-acetylneuraminate, Neu5Ac) in vitro, but has preferred substrate specificity for CMP-activated sialate (CMP-Neu5Ac), resulting in the formation of 9-O-acetylated CMP-Neu5Ac (CMP-Neu5,9Ac2). CMP-Neu5,9Ac2 may be used by sialyltransferases as a sialate donor for glycoconjugate acceptors such as ganglioside GD3. O-acetylation at position C9 of ganglioside GD3 can counteract the pro-apoptotic effects of the ganglioside GD3 in tumor cells. In Mus musculus (Mouse), this protein is N-acetylneuraminate (7)9-O-acetyltransferase.